The following is a 451-amino-acid chain: Chromosomal replication initiator protein DnaA (451 aa).

Positions M1–Q73 are domain I, interacts with DnaA modulators. A domain II region spans residues Q73 to A112. Residues M113–S329 are domain III, AAA+ region. Residues G157, G159, K160, and T161 each coordinate ATP. The domain IV, binds dsDNA stretch occupies residues S330–Q451.

The protein belongs to the DnaA family. As to quaternary structure, oligomerizes as a right-handed, spiral filament on DNA at oriC.

Its subcellular location is the cytoplasm. In terms of biological role, plays an essential role in the initiation and regulation of chromosomal replication. ATP-DnaA binds to the origin of replication (oriC) to initiate formation of the DNA replication initiation complex once per cell cycle. Binds the DnaA box (a 9 base pair repeat at the origin) and separates the double-stranded (ds)DNA. Forms a right-handed helical filament on oriC DNA; dsDNA binds to the exterior of the filament while single-stranded (ss)DNA is stabiized in the filament's interior. The ATP-DnaA-oriC complex binds and stabilizes one strand of the AT-rich DNA unwinding element (DUE), permitting loading of DNA polymerase. After initiation quickly degrades to an ADP-DnaA complex that is not apt for DNA replication. Binds acidic phospholipids. This Clostridium kluyveri (strain NBRC 12016) protein is Chromosomal replication initiator protein DnaA.